Reading from the N-terminus, the 156-residue chain is MNINFTLLAQALAFAGLIWIIATKIWPPLMNAIEERQQKIAEGLAAADRSQKDLAQAQEKVNEALKEARTKANEIIDQAHARANQIVDAARNEAITEATRQKELAQAEIDAAANRAREDLRKQVSALAVTGAEKLLKREIDANAHKALLDELASEI.

Residues 3–23 form a helical membrane-spanning segment; the sequence is INFTLLAQALAFAGLIWIIAT.

The protein belongs to the ATPase B chain family. As to quaternary structure, F-type ATPases have 2 components, F(1) - the catalytic core - and F(0) - the membrane proton channel. F(1) has five subunits: alpha(3), beta(3), gamma(1), delta(1), epsilon(1). F(0) has three main subunits: a(1), b(2) and c(10-14). The alpha and beta chains form an alternating ring which encloses part of the gamma chain. F(1) is attached to F(0) by a central stalk formed by the gamma and epsilon chains, while a peripheral stalk is formed by the delta and b chains.

It localises to the cell membrane. F(1)F(0) ATP synthase produces ATP from ADP in the presence of a proton or sodium gradient. F-type ATPases consist of two structural domains, F(1) containing the extramembraneous catalytic core and F(0) containing the membrane proton channel, linked together by a central stalk and a peripheral stalk. During catalysis, ATP synthesis in the catalytic domain of F(1) is coupled via a rotary mechanism of the central stalk subunits to proton translocation. Functionally, component of the F(0) channel, it forms part of the peripheral stalk, linking F(1) to F(0). In Stenotrophomonas maltophilia (strain K279a), this protein is ATP synthase subunit b.